A 447-amino-acid chain; its full sequence is GTPase Der (447 aa).

EngA-type G domains are found at residues P3–D167 and I181–T354. GTP-binding positions include G9 to S16, D56 to F60, N119 to E122, G187 to S194, D234 to L238, and N299 to D302. One can recognise a KH-like domain in the interval R355–Q439.

This sequence belongs to the TRAFAC class TrmE-Era-EngA-EngB-Septin-like GTPase superfamily. EngA (Der) GTPase family. Associates with the 50S ribosomal subunit.

GTPase that plays an essential role in the late steps of ribosome biogenesis. This chain is GTPase Der, found in Variovorax paradoxus (strain S110).